We begin with the raw amino-acid sequence, 600 residues long: UvrABC system protein C (600 aa).

The region spanning 15–100 (NSTGVYQYFN…IKQLHPKYNI (86 aa)) is the GIY-YIG domain. The UVR domain maps to 203–238 (SVLLKNLEKQMLVLAQNENYEEAAKVRDQIAMIKDL).

This sequence belongs to the UvrC family. In terms of assembly, interacts with UvrB in an incision complex.

It localises to the cytoplasm. The UvrABC repair system catalyzes the recognition and processing of DNA lesions. UvrC both incises the 5' and 3' sides of the lesion. The N-terminal half is responsible for the 3' incision and the C-terminal half is responsible for the 5' incision. In Campylobacter jejuni subsp. jejuni serotype O:2 (strain ATCC 700819 / NCTC 11168), this protein is UvrABC system protein C.